A 545-amino-acid polypeptide reads, in one-letter code: MAAKDVKFGNDARVKMLKGVNVLADAVKVTLGPKGRNVILDKSFGAPTITKDGVSVAREIELEDKFENMGAQMVKEVASKANDAAGDGTTTATVLAQAIVNEGLKAVAAGMNPMDLKRGIDKAVSAVVSELKNLSKPCETAKEIEQVGTISANSDSIVGQLISQAMEKVGKEGVITVEDGTGLEDELDVVEGMQFDRGYLSPYFINKPETATVELDNPYLLLVDKKISNIRELLPVLEGVAKAGKPLLIIAEDVEGEALATLVVNTMRGIVKVAAVKAPGFGDRRKAMLQDIAILTAGTVISEEIGMELEKATLEDLGQAKRVVINKDNTTIIDGIGDEAQIKGRVAQIRQQIEESTSDYDKEKLQERVAKLAGGVAVIKVGAATEVEMKEKKDRVDDALHATRAAVEEGIVAGGGVALVRAAAKVAASLKGDNEEQNVGIKLALRAMEAPLRQIVTNSGEEASVVASAVKNGEGNFGYNAGTEQYGDMIEMGILDPTKVTRSALQFAASVAGLMITTECMVTDLPKDDKADLGAAGMGGMGGMM.

ATP contacts are provided by residues 30 to 33 (TLGP), lysine 51, 87 to 91 (DGTTT), glycine 415, and aspartate 496.

This sequence belongs to the chaperonin (HSP60) family. Forms a cylinder of 14 subunits composed of two heptameric rings stacked back-to-back. Interacts with the co-chaperonin GroES.

It is found in the cytoplasm. It catalyses the reaction ATP + H2O + a folded polypeptide = ADP + phosphate + an unfolded polypeptide.. Together with its co-chaperonin GroES, plays an essential role in assisting protein folding. The GroEL-GroES system forms a nano-cage that allows encapsulation of the non-native substrate proteins and provides a physical environment optimized to promote and accelerate protein folding. The protein is Chaperonin GroEL of Haemophilus influenzae (strain 86-028NP).